A 72-amino-acid polypeptide reads, in one-letter code: Large ribosomal subunit protein bL28 (72 aa).

This sequence belongs to the bacterial ribosomal protein bL28 family.

The chain is Large ribosomal subunit protein bL28 from Chlorobium limicola (strain DSM 245 / NBRC 103803 / 6330).